Reading from the N-terminus, the 942-residue chain is MERAMEQLNRLTRSLRRARTVELPDDNETAVYTLMPMVMADQHRSVSELLSNSKFDVNYAFGRVKRSLLHIAANCGSVECLVLLLKKGANPNYQDISGCTPLHLAARNGQKKCMSKLLEYSADVNICNNEGLTAIHWLAVNGRTELLHDLVQHVSNVDVEDAMGQTALHVACQNGHKTTVQCLLDSGADINRPNVSGATPLYFACSHGQRDTAQILLMRGAKYLPDKNGITPLDLCVQGGYGETCEVLIQYHPRLFQTIIQMTQNEDLRENMLRQVLEHLSQQSESQYLKILTSLAEVATTNGHKLLSLSSNYEAQMKSLLRIVRIFCHVFRIGPSSPSNGNDMGYNGNKTPRSQVFKVRKVYDVVRKIDVKEMNFTKHAFINQTSHEQEPLELLWHSLDEWLVLIATELMKNKRDSANITSILLKQKGPDHQDATPTPSFAAAGTESRKELSTDTGDSKTYEVAGKQEAYADCQDVISMTANRLSAVIQAFYMCCSCQMPQGMTSPRFIEFVCKHDDVLKCFVNRNPKIIFDHFHFLLECPELMSRFMHIIKAQPFKDRCEWFYEHLHSGQPDSDMVHRPVNENDILLVHRDSIFRSSCEVVSKANCAKLKQGIAVRFHGEEGMGQGVVREWFDILSSEIVNPDYALFTQSADGTTFQPNSNSSVNPDHLNYFRFAGQILGLALNHRQLVNIYFTRSFYKHILGIPVNYQDVASIDPEYAKNLQWILDNDISDLGLELTFSVETDVFGAMEEVPLKPGGASILVTQENKAEYVQLVTELRMTRAIQPQINAFLQGFHMFIPPSLIQLFDEYELELLLSGMPEIDVNDWLKNTEYTSGYERGDQVIQWFWDVVEELTQEERVLLLQFVTGSSRVPHGGFAHIMGGSGLQNFTIAAVPYTANLLPTSSTCINMLKLPEYPSKEILKDRLLVALHCGSYGYTMA.

7 ANK repeats span residues 23-55 (LPDD…NSKF), 64-93 (VKRS…NPNY), 97-126 (SGCT…DVNI), 130-159 (EGLT…NVDV), 163-192 (MGQT…DINR), 196-226 (SGAT…YLPD), and 228-253 (NGIT…QYHP). The interval 428 to 459 (KGPDHQDATPTPSFAAAGTESRKELSTDTGDS) is disordered. The span at 447 to 459 (ESRKELSTDTGDS) shows a compositional bias: basic and acidic residues. Residues 607-942 (NCAKLKQGIA…HCGSYGYTMA (336 aa)) form the HECT domain. Catalysis depends on C909, which acts as the Glycyl thioester intermediate.

The protein localises to the golgi apparatus. Its subcellular location is the golgi stack membrane. The protein resides in the cytoplasm. It is found in the endoplasmic reticulum. The enzyme catalyses S-ubiquitinyl-[E2 ubiquitin-conjugating enzyme]-L-cysteine + [acceptor protein]-L-lysine = [E2 ubiquitin-conjugating enzyme]-L-cysteine + N(6)-ubiquitinyl-[acceptor protein]-L-lysine.. It functions in the pathway protein modification; protein ubiquitination. In terms of biological role, E3 ubiquitin-protein ligase involved in Golgi membrane fusion and regulation of small GTPases. Acts as a regulator of Golgi membrane dynamics during the cell cycle: recruited to Golgi membrane by Rab proteins and regulates postmitotic Golgi membrane fusion. Acts by mediating ubiquitination during mitotic Golgi disassembly, ubiquitination serving as a signal for Golgi reassembly later, after cell division. The sequence is that of E3 ubiquitin-protein ligase HACE1 (HACE1) from Gallus gallus (Chicken).